The chain runs to 176 residues: ATP-dependent protease subunit HslV (176 aa).

The active site involves Thr6. Na(+)-binding residues include Gly161, Cys164, and Thr167.

Belongs to the peptidase T1B family. HslV subfamily. As to quaternary structure, a double ring-shaped homohexamer of HslV is capped on each side by a ring-shaped HslU homohexamer. The assembly of the HslU/HslV complex is dependent on binding of ATP.

Its subcellular location is the cytoplasm. It catalyses the reaction ATP-dependent cleavage of peptide bonds with broad specificity.. With respect to regulation, allosterically activated by HslU binding. Its function is as follows. Protease subunit of a proteasome-like degradation complex believed to be a general protein degrading machinery. In Thermotoga sp. (strain RQ2), this protein is ATP-dependent protease subunit HslV.